The primary structure comprises 502 residues: DnaJ homolog subfamily C member 3 homolog (502 aa).

Positions 1–25 are cleaved as a signal peptide; sequence MIVNKKYFLLICIIILISINCLVLA. TPR repeat units follow at residues 29-62, 69-102, 103-136, 184-217, 218-251, 264-297, 302-335, and 336-369; these read IENF…IGSD, VSLL…NPDN, IHAR…RPDN, KEVR…EPSS, VAAL…DPDN, FEKS…EPNS, TPLY…DELN, and ADAL…KPND. An N-linked (GlcNAc...) asparagine glycan is attached at asparagine 51. A disulfide bridge links cysteine 309 with cysteine 325. Residues 390–457 enclose the J domain; the sequence is DYYKILGIQK…EKRKRYDMGE (68 aa).

The protein resides in the secreted. Its subcellular location is the endoplasmic reticulum lumen. Its function is as follows. May be involved in the unfolded protein response (UPR) during ER stress. This Dictyostelium discoideum (Social amoeba) protein is DnaJ homolog subfamily C member 3 homolog (dnajc3).